A 599-amino-acid chain; its full sequence is Sulfite reductase [NADPH] flavoprotein alpha-component (599 aa).

The region spanning 64–202 is the Flavodoxin-like domain; the sequence is ITIISASQTG…AASEWRARVV (139 aa). FMN-binding positions include 70 to 75, 117 to 120, and 153 to 162; these read SQTGNA, STQG, and LGDSSYEFFC. One can recognise an FAD-binding FR-type domain in the interval 234 to 448; it reads DAPLAASLSV…IEHNDNFRLP (215 aa). FAD-binding positions include T322, A356, 386-389, 404-406, Y410, and 419-422; these read RLYS, TVG, and GGAS. NADP(+) is bound by residues 519–520, 525–529, and D561; these read SR and KIYVQ. Y599 contacts FAD.

Belongs to the NADPH-dependent sulphite reductase flavoprotein subunit CysJ family. This sequence in the N-terminal section; belongs to the flavodoxin family. It in the C-terminal section; belongs to the flavoprotein pyridine nucleotide cytochrome reductase family. Alpha(8)-beta(8). The alpha component is a flavoprotein, the beta component is a hemoprotein. FAD serves as cofactor. The cofactor is FMN.

The catalysed reaction is hydrogen sulfide + 3 NADP(+) + 3 H2O = sulfite + 3 NADPH + 4 H(+). Its pathway is sulfur metabolism; hydrogen sulfide biosynthesis; hydrogen sulfide from sulfite (NADPH route): step 1/1. Its function is as follows. Component of the sulfite reductase complex that catalyzes the 6-electron reduction of sulfite to sulfide. This is one of several activities required for the biosynthesis of L-cysteine from sulfate. The flavoprotein component catalyzes the electron flow from NADPH -&gt; FAD -&gt; FMN to the hemoprotein component. This Escherichia coli O6:H1 (strain CFT073 / ATCC 700928 / UPEC) protein is Sulfite reductase [NADPH] flavoprotein alpha-component.